We begin with the raw amino-acid sequence, 1206 residues long: DNA-directed RNA polymerase subunit beta' (1206 aa).

Zn(2+) contacts are provided by C60, C62, C75, and C78. Positions 449, 451, and 453 each coordinate Mg(2+). The Zn(2+) site is built by C818, C892, C899, and C902.

The protein belongs to the RNA polymerase beta' chain family. The RNAP catalytic core consists of 2 alpha, 1 beta, 1 beta' and 1 omega subunit. When a sigma factor is associated with the core the holoenzyme is formed, which can initiate transcription. Mg(2+) serves as cofactor. The cofactor is Zn(2+).

The enzyme catalyses RNA(n) + a ribonucleoside 5'-triphosphate = RNA(n+1) + diphosphate. DNA-dependent RNA polymerase catalyzes the transcription of DNA into RNA using the four ribonucleoside triphosphates as substrates. This is DNA-directed RNA polymerase subunit beta' from Shouchella clausii (strain KSM-K16) (Alkalihalobacillus clausii).